A 361-amino-acid chain; its full sequence is sn-glycerol-3-phosphate import ATP-binding protein UgpC (361 aa).

An ABC transporter domain is found at 4–235; it reads LSLKGVRKSY…PATVFVAGFI (232 aa). 37–44 is an ATP binding site; that stretch reads GPSGCGKS.

It belongs to the ABC transporter superfamily. sn-glycerol-3-phosphate importer (TC 3.A.1.1.3) family. The complex is composed of two ATP-binding proteins (UgpC), two transmembrane proteins (UgpA and UgpE) and a solute-binding protein (UgpB).

It localises to the cell inner membrane. The catalysed reaction is sn-glycerol 3-phosphate(out) + ATP + H2O = sn-glycerol 3-phosphate(in) + ADP + phosphate + H(+). Its function is as follows. Part of the ABC transporter complex UgpBAEC involved in sn-glycerol-3-phosphate (G3P) import. Responsible for energy coupling to the transport system. This Burkholderia cenocepacia (strain HI2424) protein is sn-glycerol-3-phosphate import ATP-binding protein UgpC.